The following is a 607-amino-acid chain: Protein NRT1/ PTR FAMILY 1.2 (607 aa).

10 helical membrane passes run 65 to 85, 96 to 116, 138 to 158, 185 to 205, 215 to 235, 374 to 394, 418 to 438, 460 to 480, 496 to 516, and 544 to 564; these read TNVLFMWSAASNFTPLLGAFL, ISIASLSSFLGMVLLWLTAML, ASQLALLYSAFALISIGSGGI, FFGWYYASSAVAVLIAFTGIV, IGFGVPAVLMLIAALLFILAS, VPAGSFGMFTIIALALWVILY, MGLGLFMSFLAMAISAMVESF, AMWLVPQYVLHGLAEALTAIG, IAASLFGLGMAVASLLASVVL, and YYWVLAIMSFINVIYYVICSW. Phosphoserine is present on serine 601.

This sequence belongs to the major facilitator superfamily. Proton-dependent oligopeptide transporter (POT/PTR) (TC 2.A.17) family. Expressed in shoots, stems, leaves, flowers and siliques. Mainly detected in larger expanded leaves, in the companion cells of major veins.

It is found in the cell membrane. Its function is as follows. Low-affinity nitrate transporter involved in xylem-to-phloem transfer for redistributing nitrate into developing leaves. Not involved in dipeptides transport. The polypeptide is Protein NRT1/ PTR FAMILY 1.2 (NPF1.2) (Arabidopsis thaliana (Mouse-ear cress)).